The chain runs to 284 residues: Phosphatidylglycerol--prolipoprotein diacylglyceryl transferase (284 aa).

The next 7 helical transmembrane spans lie at 14-34 (IAFSLGSIEVHWYGLAYACAI), 62-82 (YFLWAELGIVLGARVGYILIY), 106-126 (FVGIRGMSYHGGLVGFLIASY), 136-156 (LLIYLDLIAISLPLGYVFGRI), 190-210 (PSQLIEAFLEGVIVFLMVLWA), 218-238 (GLLIVVYGLGYSLMRFIAEFY), and 252-272 (LSMGQILSLLMVIVSLGILLY). Arg155 provides a ligand contact to a 1,2-diacyl-sn-glycero-3-phospho-(1'-sn-glycerol).

It belongs to the Lgt family.

Its subcellular location is the cell inner membrane. It catalyses the reaction L-cysteinyl-[prolipoprotein] + a 1,2-diacyl-sn-glycero-3-phospho-(1'-sn-glycerol) = an S-1,2-diacyl-sn-glyceryl-L-cysteinyl-[prolipoprotein] + sn-glycerol 1-phosphate + H(+). The protein operates within protein modification; lipoprotein biosynthesis (diacylglyceryl transfer). Its function is as follows. Catalyzes the transfer of the diacylglyceryl group from phosphatidylglycerol to the sulfhydryl group of the N-terminal cysteine of a prolipoprotein, the first step in the formation of mature lipoproteins. This is Phosphatidylglycerol--prolipoprotein diacylglyceryl transferase from Helicobacter pylori (strain Shi470).